The following is a 435-amino-acid chain: D-amino acid dehydrogenase (435 aa).

Position 3–17 (3–17 (VLILGSGVIGTTSAW)) interacts with FAD.

The protein belongs to the DadA oxidoreductase family. It depends on FAD as a cofactor.

The enzyme catalyses a D-alpha-amino acid + A + H2O = a 2-oxocarboxylate + AH2 + NH4(+). It participates in amino-acid degradation; D-alanine degradation; NH(3) and pyruvate from D-alanine: step 1/1. In terms of biological role, oxidative deamination of D-amino acids. The polypeptide is D-amino acid dehydrogenase (Xylella fastidiosa (strain M12)).